A 410-amino-acid chain; its full sequence is Peptidase T (410 aa).

Residue histidine 77 coordinates Zn(2+). Aspartate 79 is a catalytic residue. Aspartate 140 is a Zn(2+) binding site. The active-site Proton acceptor is glutamate 174. Zn(2+)-binding residues include glutamate 175, aspartate 197, and histidine 379.

It belongs to the peptidase M20B family. The cofactor is Zn(2+).

It localises to the cytoplasm. It carries out the reaction Release of the N-terminal residue from a tripeptide.. Cleaves the N-terminal amino acid of tripeptides. The chain is Peptidase T from Desulfitobacterium hafniense (strain Y51).